The primary structure comprises 268 residues: MHELLLFASVPAHQHHELLQQLAGLTAMQPQHRLERRLVFKAYRKPGLVNVRVGASQDLQGAELQRLNKMLNGGMFYTQVVGPVSEADFGAPASPVADQDAHMSGTDEKLSVRTHYYDYENQPWKLEFRDIPEAATRSAVTARLMSSASLPKGDITVPMNAWGYNFVTEYAVEGDIFIHNDIVIFLHRVLHYPTESQEPRRQLPALNEMTPLDRSGGYVLQAAITVQDGGNQETMKIASQHLFGLREQLKSAVRLEQADRLSLDTRAK.

Belongs to the Mediator complex subunit 18 family. Component of the Mediator complex.

It localises to the nucleus. In terms of biological role, component of the Mediator complex, a coactivator involved in the regulated transcription of nearly all RNA polymerase II-dependent genes. Mediator functions as a bridge to convey information from gene-specific regulatory proteins to the basal RNA polymerase II transcription machinery. Mediator is recruited to promoters by direct interactions with regulatory proteins and serves as a scaffold for the assembly of a functional preinitiation complex with RNA polymerase II and the general transcription factors. The polypeptide is Mediator of RNA polymerase II transcription subunit 18 (srb5) (Neosartorya fischeri (strain ATCC 1020 / DSM 3700 / CBS 544.65 / FGSC A1164 / JCM 1740 / NRRL 181 / WB 181) (Aspergillus fischerianus)).